The sequence spans 470 residues: Transcriptional activator PmfR (470 aa).

In terms of assembly, forms oligomers in solution, probably homotetramers.

Its pathway is alkaloid degradation; nicotine degradation [regulation]. Its function is as follows. Transcriptional regulator involved in the activation of the purU-mabO-folD-nepA-nepB and mao-ORF55-nbr operons implicated in the nicotine catabolic pathway. The sequence GTTT-14 bp-AAAC seems to be the core binding site of the regulator upstream of the -35 promoter region of the operon. The polypeptide is Transcriptional activator PmfR (pmfR) (Paenarthrobacter nicotinovorans (Arthrobacter nicotinovorans)).